Reading from the N-terminus, the 328-residue chain is MINIAIDAMGGDFGEKPIIEGVLKALEAKPFNAILVGNSKILKPLIPKKLEQYIQYEEASEIFSMNGNATDALKNKETTIYKAINLLKEKKVDAVVSAGHSGASMSLATLRLGRLKGISRPAIATLMPNIVNRTLLLDVGANTDCKAENLFQFAIMGEVYAREIMQIQKPRLALLSNGEEECKGNELTKESHQLMKKIPNFIGNAEGRDIFNGEIDVLVCDGFDGNVILKACEGVATAIFQLLKNEVKQSFISKIGALLMKSSFKKLKKHTDWQEYGGAPLLGVNGCVIISHGKSDSRAIKNAIFQAINFSQSHINELIENELGKYNA.

It belongs to the PlsX family. Homodimer. Probably interacts with PlsY.

The protein localises to the cytoplasm. It catalyses the reaction a fatty acyl-[ACP] + phosphate = an acyl phosphate + holo-[ACP]. It participates in lipid metabolism; phospholipid metabolism. Functionally, catalyzes the reversible formation of acyl-phosphate (acyl-PO(4)) from acyl-[acyl-carrier-protein] (acyl-ACP). This enzyme utilizes acyl-ACP as fatty acyl donor, but not acyl-CoA. This chain is Phosphate acyltransferase, found in Campylobacter jejuni (strain RM1221).